A 570-amino-acid polypeptide reads, in one-letter code: MAKYVIGSAWPYVQTVPHLGNMIGSVLSADVYARYLRLKGHEVVFVSGSDVHGTPVEVEAIQLGVDPAEYSMKMHAIVAELFKKWNISFDLYTHTHSETHIKFVQDFYLKIYENGYIFTKEDEVPYCPRDKIYLPDRFIIGKCPYCGYERARGDQCENCGRLLDPKQLIEPKCAVCGSKPEWRITKHWYLDLRRLEDRIRKYVEENPHLPPNAKEMSLAMLKEGLRPRAVTRDNKWGIPAPFPGAEGKTIYVWFEAVLGYISAVVEYFKKIGREEEWKRFWLDPETKVVFFVGKDNVPFHVIILPALLLANGGGYVMPTTTASTEYLLYEGDKFSKSRRWGVWIDEALQLLPADYWRFVLIYIRPENRDTNFSWSTALEIINKVLNDDVGNYANRVLSFIKNRMGGAVPPRGKPSRDDEEFIEKVKRLFEKAEAHYEAIELKDAVHTVVEIAREGNKYLNARAPWDLVKKDVDAANAVMYHAYWSLKFLAVGLAPAIPESAEQLWKMMGLDAPLTWEEAKRPPAVGKALGEVRPLFRKITEEEVKALLAKLEELRNQKYSRKYPWEQVVI.

The 'HIGH' region motif lies at 11-21; it reads PYVQTVPHLGN. Residues cysteine 143, cysteine 146, cysteine 156, and cysteine 159 each coordinate Zn(2+). Residues 333–337 carry the 'KMSKS' region motif; the sequence is KFSKS. Lysine 336 is an ATP binding site.

The protein belongs to the class-I aminoacyl-tRNA synthetase family. MetG type 1 subfamily. The cofactor is Zn(2+).

The protein resides in the cytoplasm. It catalyses the reaction tRNA(Met) + L-methionine + ATP = L-methionyl-tRNA(Met) + AMP + diphosphate. In terms of biological role, is required not only for elongation of protein synthesis but also for the initiation of all mRNA translation through initiator tRNA(fMet) aminoacylation. This is Methionine--tRNA ligase from Pyrobaculum aerophilum (strain ATCC 51768 / DSM 7523 / JCM 9630 / CIP 104966 / NBRC 100827 / IM2).